Consider the following 572-residue polypeptide: Proline--tRNA ligase (572 aa).

Belongs to the class-II aminoacyl-tRNA synthetase family. ProS type 1 subfamily. Homodimer.

The protein resides in the cytoplasm. It carries out the reaction tRNA(Pro) + L-proline + ATP = L-prolyl-tRNA(Pro) + AMP + diphosphate. Its function is as follows. Catalyzes the attachment of proline to tRNA(Pro) in a two-step reaction: proline is first activated by ATP to form Pro-AMP and then transferred to the acceptor end of tRNA(Pro). As ProRS can inadvertently accommodate and process non-cognate amino acids such as alanine and cysteine, to avoid such errors it has two additional distinct editing activities against alanine. One activity is designated as 'pretransfer' editing and involves the tRNA(Pro)-independent hydrolysis of activated Ala-AMP. The other activity is designated 'posttransfer' editing and involves deacylation of mischarged Ala-tRNA(Pro). The misacylated Cys-tRNA(Pro) is not edited by ProRS. In Erwinia tasmaniensis (strain DSM 17950 / CFBP 7177 / CIP 109463 / NCPPB 4357 / Et1/99), this protein is Proline--tRNA ligase.